The primary structure comprises 343 residues: Heat-inducible transcription repressor HrcA (343 aa).

This sequence belongs to the HrcA family.

Its function is as follows. Negative regulator of class I heat shock genes (grpE-dnaK-dnaJ and groELS operons). Prevents heat-shock induction of these operons. This is Heat-inducible transcription repressor HrcA from Thermoanaerobacter sp. (strain X514).